Consider the following 292-residue polypeptide: Ribosomal protein L11 methyltransferase (292 aa).

Residues threonine 136, glycine 159, aspartate 181, and asparagine 228 each coordinate S-adenosyl-L-methionine.

The protein belongs to the methyltransferase superfamily. PrmA family.

The protein localises to the cytoplasm. The catalysed reaction is L-lysyl-[protein] + 3 S-adenosyl-L-methionine = N(6),N(6),N(6)-trimethyl-L-lysyl-[protein] + 3 S-adenosyl-L-homocysteine + 3 H(+). Its function is as follows. Methylates ribosomal protein L11. The sequence is that of Ribosomal protein L11 methyltransferase from Agrobacterium fabrum (strain C58 / ATCC 33970) (Agrobacterium tumefaciens (strain C58)).